Reading from the N-terminus, the 261-residue chain is tRNA pseudouridine synthase A (261 aa).

The Nucleophile role is filled by Asp-51. Residue Tyr-109 participates in substrate binding.

Belongs to the tRNA pseudouridine synthase TruA family. Homodimer.

It carries out the reaction uridine(38/39/40) in tRNA = pseudouridine(38/39/40) in tRNA. In terms of biological role, formation of pseudouridine at positions 38, 39 and 40 in the anticodon stem and loop of transfer RNAs. The protein is tRNA pseudouridine synthase A of Methylobacillus flagellatus (strain ATCC 51484 / DSM 6875 / VKM B-1610 / KT).